A 339-amino-acid polypeptide reads, in one-letter code: Ketol-acid reductoisomerase (NADP(+)) (339 aa).

The 182-residue stretch at Met1 to Thr182 folds into the KARI N-terminal Rossmann domain. Residues Tyr24–Gln27, Arg48, Ser51, Ser53, and Asp83–Gln86 contribute to the NADP(+) site. His108 is a catalytic residue. Position 134 (Gly134) interacts with NADP(+). Positions Thr183–Ile328 constitute a KARI C-terminal knotted domain. Mg(2+) contacts are provided by Asp191, Glu195, Glu227, and Glu231. Residue Ser252 coordinates substrate.

It belongs to the ketol-acid reductoisomerase family. Requires Mg(2+) as cofactor.

It catalyses the reaction (2R)-2,3-dihydroxy-3-methylbutanoate + NADP(+) = (2S)-2-acetolactate + NADPH + H(+). The enzyme catalyses (2R,3R)-2,3-dihydroxy-3-methylpentanoate + NADP(+) = (S)-2-ethyl-2-hydroxy-3-oxobutanoate + NADPH + H(+). It functions in the pathway amino-acid biosynthesis; L-isoleucine biosynthesis; L-isoleucine from 2-oxobutanoate: step 2/4. It participates in amino-acid biosynthesis; L-valine biosynthesis; L-valine from pyruvate: step 2/4. Its function is as follows. Involved in the biosynthesis of branched-chain amino acids (BCAA). Catalyzes an alkyl-migration followed by a ketol-acid reduction of (S)-2-acetolactate (S2AL) to yield (R)-2,3-dihydroxy-isovalerate. In the isomerase reaction, S2AL is rearranged via a Mg-dependent methyl migration to produce 3-hydroxy-3-methyl-2-ketobutyrate (HMKB). In the reductase reaction, this 2-ketoacid undergoes a metal-dependent reduction by NADPH to yield (R)-2,3-dihydroxy-isovalerate. In Azorhizobium caulinodans (strain ATCC 43989 / DSM 5975 / JCM 20966 / LMG 6465 / NBRC 14845 / NCIMB 13405 / ORS 571), this protein is Ketol-acid reductoisomerase (NADP(+)).